The chain runs to 185 residues: Ribosome-recycling factor (185 aa).

Belongs to the RRF family.

The protein resides in the cytoplasm. Functionally, responsible for the release of ribosomes from messenger RNA at the termination of protein biosynthesis. May increase the efficiency of translation by recycling ribosomes from one round of translation to another. In Lactococcus lactis subsp. lactis (strain IL1403) (Streptococcus lactis), this protein is Ribosome-recycling factor.